The chain runs to 354 residues: Histidinol-phosphate aminotransferase (354 aa).

Lysine 210 is modified (N6-(pyridoxal phosphate)lysine).

It belongs to the class-II pyridoxal-phosphate-dependent aminotransferase family. Histidinol-phosphate aminotransferase subfamily. In terms of assembly, homodimer. Requires pyridoxal 5'-phosphate as cofactor.

It carries out the reaction L-histidinol phosphate + 2-oxoglutarate = 3-(imidazol-4-yl)-2-oxopropyl phosphate + L-glutamate. It participates in amino-acid biosynthesis; L-histidine biosynthesis; L-histidine from 5-phospho-alpha-D-ribose 1-diphosphate: step 7/9. This chain is Histidinol-phosphate aminotransferase, found in Clostridium botulinum (strain ATCC 19397 / Type A).